The primary structure comprises 201 residues: Histidinol dehydrogenase (201 aa).

The protein belongs to the histidinol dehydrogenase family. In terms of assembly, homodimer. Requires Zn(2+) as cofactor.

The enzyme catalyses L-histidinol + 2 NAD(+) + H2O = L-histidine + 2 NADH + 3 H(+). The protein operates within amino-acid biosynthesis; L-histidine biosynthesis; L-histidine from 5-phospho-alpha-D-ribose 1-diphosphate: step 9/9. In terms of biological role, catalyzes the sequential NAD-dependent oxidations of L-histidinol to L-histidinaldehyde and then to L-histidine. This chain is Histidinol dehydrogenase (hisD), found in Buchnera aphidicola subsp. Melaphis rhois.